The sequence spans 81 residues: Small ribosomal subunit protein bS18 (81 aa).

The protein belongs to the bacterial ribosomal protein bS18 family. In terms of assembly, part of the 30S ribosomal subunit. Forms a tight heterodimer with protein bS6.

Binds as a heterodimer with protein bS6 to the central domain of the 16S rRNA, where it helps stabilize the platform of the 30S subunit. In Rubrobacter xylanophilus (strain DSM 9941 / JCM 11954 / NBRC 16129 / PRD-1), this protein is Small ribosomal subunit protein bS18.